Consider the following 273-residue polypeptide: Dermonecrotic toxin SdSicTox-betaIIB1bxi (273 aa).

The active site involves histidine 4. The Mg(2+) site is built by glutamate 24 and aspartate 26. Residue histidine 40 is the Nucleophile of the active site. Intrachain disulfides connect cysteine 44/cysteine 50 and cysteine 46/cysteine 189. Aspartate 84 lines the Mg(2+) pocket.

It belongs to the arthropod phospholipase D family. Class II subfamily. It depends on Mg(2+) as a cofactor. Expressed by the venom gland.

It localises to the secreted. It carries out the reaction an N-(acyl)-sphingosylphosphocholine = an N-(acyl)-sphingosyl-1,3-cyclic phosphate + choline. The catalysed reaction is an N-(acyl)-sphingosylphosphoethanolamine = an N-(acyl)-sphingosyl-1,3-cyclic phosphate + ethanolamine. It catalyses the reaction a 1-acyl-sn-glycero-3-phosphocholine = a 1-acyl-sn-glycero-2,3-cyclic phosphate + choline. The enzyme catalyses a 1-acyl-sn-glycero-3-phosphoethanolamine = a 1-acyl-sn-glycero-2,3-cyclic phosphate + ethanolamine. In terms of biological role, dermonecrotic toxins cleave the phosphodiester linkage between the phosphate and headgroup of certain phospholipids (sphingolipid and lysolipid substrates), forming an alcohol (often choline) and a cyclic phosphate. This toxin acts on sphingomyelin (SM). It may also act on ceramide phosphoethanolamine (CPE), lysophosphatidylcholine (LPC) and lysophosphatidylethanolamine (LPE), but not on lysophosphatidylserine (LPS), and lysophosphatidylglycerol (LPG). It acts by transphosphatidylation, releasing exclusively cyclic phosphate products as second products. Induces dermonecrosis, hemolysis, increased vascular permeability, edema, inflammatory response, and platelet aggregation. This is Dermonecrotic toxin SdSicTox-betaIIB1bxi from Sicarius cf. damarensis (strain GJB-2008) (Six-eyed sand spider).